A 438-amino-acid chain; its full sequence is Cell division cycle-associated 7-like protein (438 aa).

The Integrase domain-binding motif 1 (IBM1) signature appears at 9-33 (IPKEVADIFNAPSDDEEFVGFQDDV). Ser-21 is subject to Phosphoserine. The segment at 55 to 114 (ACLHSKYFTEELRRIFKEDTDSDNEDFEGFTESELNIGSNPELIESELSDGDKTHPMMSD) is PSIP1-binding. The Integrase domain-binding motif 2 (IBM2) motif lies at 62–88 (FTEELRRIFKEDTDSDNEDFEGFTESE). The tract at residues 72 to 199 (EDTDSDNEDF…ESRAESQETS (128 aa)) is disordered. The residue at position 74 (Thr-74) is a Phosphothreonine. A compositionally biased stretch (acidic residues) spans 74 to 85 (TDSDNEDFEGFT). Ser-76 is subject to Phosphoserine. Thr-85 carries the post-translational modification Phosphothreonine. A phosphoserine mark is found at Ser-100, Ser-103, Ser-113, Ser-135, Ser-136, Ser-183, and Ser-185. Positions 113–123 (SDEEDDDDEEE) are enriched in acidic residues. Residues 166–183 (TDLRREKSCRQPKEKEDS) show a composition bias toward basic and acidic residues. The MYC-binding stretch occupies residues 201 to 223 (ALLKRAMNIKENKAMLAQLLAEL). Glycyl lysine isopeptide (Lys-Gly) (interchain with G-Cter in SUMO2) cross-links involve residues Lys-210 and Lys-213. Residue Ser-249 is modified to Phosphoserine.

As to quaternary structure, interacts with MYC. Interacts (via IBM motifs) with PSIP1 (via IBD domain); phosphorylation increases its affinity for PSIP1. Post-translationally, phosphorylation increases its interaction with PSIP1.

The protein localises to the cytoplasm. The protein resides in the nucleus. In terms of biological role, plays a role in transcriptional regulation as a repressor that inhibits monoamine oxidase A (MAOA) activity and gene expression by binding to the promoter. Plays an important oncogenic role in mediating the full transforming effect of MYC in medulloblastoma cells. Involved in apoptotic signaling pathways; May act downstream of P38-kinase and BCL-2, but upstream of CASP3/caspase-3 as well as CCND1/cyclin D1 and E2F1. In Rattus norvegicus (Rat), this protein is Cell division cycle-associated 7-like protein (Cdca7l).